The chain runs to 867 residues: DNA mismatch repair protein MutS (867 aa).

609-616 (GPNMSGKS) serves as a coordination point for ATP.

The protein belongs to the DNA mismatch repair MutS family.

This protein is involved in the repair of mismatches in DNA. It is possible that it carries out the mismatch recognition step. This protein has a weak ATPase activity. The chain is DNA mismatch repair protein MutS from Latilactobacillus sakei subsp. sakei (strain 23K) (Lactobacillus sakei subsp. sakei).